Here is a 101-residue protein sequence, read N- to C-terminus: Signal recognition particle 19 kDa protein (101 aa).

Belongs to the SRP19 family. As to quaternary structure, part of the signal recognition particle protein translocation system, which is composed of SRP and FtsY. Archaeal SRP consists of a 7S RNA molecule of 300 nucleotides and two protein subunits: SRP54 and SRP19.

The protein localises to the cytoplasm. Involved in targeting and insertion of nascent membrane proteins into the cytoplasmic membrane. Binds directly to 7S RNA and mediates binding of the 54 kDa subunit of the SRP. The chain is Signal recognition particle 19 kDa protein from Methanosarcina mazei (strain ATCC BAA-159 / DSM 3647 / Goe1 / Go1 / JCM 11833 / OCM 88) (Methanosarcina frisia).